We begin with the raw amino-acid sequence, 208 residues long: Thymidylate kinase (208 aa).

Residue 9-16 (GGEGCGKS) coordinates ATP.

It belongs to the thymidylate kinase family.

The enzyme catalyses dTMP + ATP = dTDP + ADP. Functionally, phosphorylation of dTMP to form dTDP in both de novo and salvage pathways of dTTP synthesis. The protein is Thymidylate kinase of Dehalococcoides mccartyi (strain CBDB1).